Reading from the N-terminus, the 246-residue chain is tRNA (guanine-N(7)-)-methyltransferase (246 aa).

Positions 1-26 (MSDSSSSSENAPATPESPGRPPRGIK) are disordered. S-adenosyl-L-methionine is bound by residues Glu74, Glu99, Asp126, and Asp149. Asp149 is a catalytic residue. Substrate is bound by residues Lys153, Asp185, and 224–227 (TKFE).

This sequence belongs to the class I-like SAM-binding methyltransferase superfamily. TrmB family.

It carries out the reaction guanosine(46) in tRNA + S-adenosyl-L-methionine = N(7)-methylguanosine(46) in tRNA + S-adenosyl-L-homocysteine. The protein operates within tRNA modification; N(7)-methylguanine-tRNA biosynthesis. In terms of biological role, catalyzes the formation of N(7)-methylguanine at position 46 (m7G46) in tRNA. The chain is tRNA (guanine-N(7)-)-methyltransferase from Chromohalobacter salexigens (strain ATCC BAA-138 / DSM 3043 / CIP 106854 / NCIMB 13768 / 1H11).